The sequence spans 260 residues: Neurotrophin-3 (260 aa).

Residues 1–18 (MSILFYVMFLPYLCGIHA) form the signal peptide. The propeptide occupies 19–141 (TNMDKRNLPE…VNNRTSRRKR (123 aa)). N134 is a glycosylation site (N-linked (GlcNAc...) asparagine). Intrachain disulfides connect C155–C220, C198–C249, and C208–C251.

The protein belongs to the NGF-beta family.

The protein resides in the secreted. In terms of biological role, seems to promote the survival of visceral and proprioceptive sensory neurons. This chain is Neurotrophin-3 (ntf3), found in Xenopus laevis (African clawed frog).